Consider the following 289-residue polypeptide: Phosphatidylglycerol--prolipoprotein diacylglyceryl transferase (289 aa).

A run of 7 helical transmembrane segments spans residues 23-43, 61-81, 99-119, 125-145, 199-219, 226-246, and 259-279; these read ALHW…WLAV, LLYM…VLFY, GGMS…WFAH, FFQV…AGRL, SQLY…NLFI, GSVS…TEFF, and LFSM…LMMV. Arg144 contributes to the a 1,2-diacyl-sn-glycero-3-phospho-(1'-sn-glycerol) binding site.

This sequence belongs to the Lgt family.

It is found in the cell inner membrane. It carries out the reaction L-cysteinyl-[prolipoprotein] + a 1,2-diacyl-sn-glycero-3-phospho-(1'-sn-glycerol) = an S-1,2-diacyl-sn-glyceryl-L-cysteinyl-[prolipoprotein] + sn-glycerol 1-phosphate + H(+). It functions in the pathway protein modification; lipoprotein biosynthesis (diacylglyceryl transfer). Catalyzes the transfer of the diacylglyceryl group from phosphatidylglycerol to the sulfhydryl group of the N-terminal cysteine of a prolipoprotein, the first step in the formation of mature lipoproteins. In Pectobacterium carotovorum subsp. carotovorum (strain PC1), this protein is Phosphatidylglycerol--prolipoprotein diacylglyceryl transferase.